A 382-amino-acid polypeptide reads, in one-letter code: Transcription factor MYB104 (382 aa).

2 HTH myb-type domains span residues 13–69 (KKTF…KPSL) and 70–120 (KKGP…MRLK). DNA-binding regions (H-T-H motif) lie at residues 41–65 (WTHVPKRTGLPHNPASCRFRWMNHL) and 93–116 (WSQMAREFPGRTDNEIKNFWNARR). A disordered region spans residues 326–364 (IPKTDTSSESQLFQSSLRSHTDATPDIANTTGYVGSNER). 2 stretches are compositionally biased toward polar residues: residues 329 to 343 (TDTSSESQLFQSSLR) and 352 to 364 (IANTTGYVGSNER).

Its subcellular location is the nucleus. The chain is Transcription factor MYB104 (MYB104) from Arabidopsis thaliana (Mouse-ear cress).